A 325-amino-acid chain; its full sequence is Beta-ketoacyl-[acyl-carrier-protein] synthase III (325 aa).

Active-site residues include cysteine 119 and histidine 252. Positions 253-257 (QANIR) are ACP-binding. Residue asparagine 282 is part of the active site.

It belongs to the thiolase-like superfamily. FabH family. As to quaternary structure, homodimer.

It is found in the cytoplasm. It catalyses the reaction malonyl-[ACP] + acetyl-CoA + H(+) = 3-oxobutanoyl-[ACP] + CO2 + CoA. The protein operates within lipid metabolism; fatty acid biosynthesis. Catalyzes the condensation reaction of fatty acid synthesis by the addition to an acyl acceptor of two carbons from malonyl-ACP. Catalyzes the first condensation reaction which initiates fatty acid synthesis and may therefore play a role in governing the total rate of fatty acid production. Possesses both acetoacetyl-ACP synthase and acetyl transacylase activities. Its substrate specificity determines the biosynthesis of branched-chain and/or straight-chain of fatty acids. The chain is Beta-ketoacyl-[acyl-carrier-protein] synthase III from Delftia acidovorans (strain DSM 14801 / SPH-1).